The sequence spans 386 residues: 1-deoxy-D-xylulose 5-phosphate reductoisomerase (386 aa).

Residues S10, G11, S12, V13, N38, and N120 each coordinate NADPH. K121 lines the 1-deoxy-D-xylulose 5-phosphate pocket. Residue E122 coordinates NADPH. Position 146 (D146) interacts with Mn(2+). 1-deoxy-D-xylulose 5-phosphate is bound by residues S147, E148, S172, and H195. E148 is a Mn(2+) binding site. Position 201 (G201) interacts with NADPH. 4 residues coordinate 1-deoxy-D-xylulose 5-phosphate: S208, N213, K214, and E217. E217 contacts Mn(2+).

It belongs to the DXR family. It depends on Mg(2+) as a cofactor. Mn(2+) serves as cofactor.

It catalyses the reaction 2-C-methyl-D-erythritol 4-phosphate + NADP(+) = 1-deoxy-D-xylulose 5-phosphate + NADPH + H(+). It participates in isoprenoid biosynthesis; isopentenyl diphosphate biosynthesis via DXP pathway; isopentenyl diphosphate from 1-deoxy-D-xylulose 5-phosphate: step 1/6. Functionally, catalyzes the NADPH-dependent rearrangement and reduction of 1-deoxy-D-xylulose-5-phosphate (DXP) to 2-C-methyl-D-erythritol 4-phosphate (MEP). The chain is 1-deoxy-D-xylulose 5-phosphate reductoisomerase from Leptospira biflexa serovar Patoc (strain Patoc 1 / Ames).